A 156-amino-acid polypeptide reads, in one-letter code: Nucleoredoxin-like protein 2 (156 aa).

In terms of domain architecture, Thioredoxin spans 9–147 (HLVTCKGATV…LACFQDWVEA (139 aa)).

It belongs to the nucleoredoxin family.

In terms of biological role, may be involved in the maintenance of both the function and the viability of sensory neurons, including photoreceptors and olfactory neurons. The chain is Nucleoredoxin-like protein 2 (NXNL2) from Homo sapiens (Human).